Consider the following 468-residue polypeptide: IQ domain-containing protein C (468 aa).

The IQ domain maps to 6–35 (LVLKVTALQACIRGFLVRRQFQSLRGEYEA). Disordered regions lie at residues 113 to 157 (NASS…GPGL), 202 to 245 (EVNQ…PGEP), and 329 to 468 (SHKE…GPAG). A compositionally biased stretch (basic and acidic residues) spans 139-150 (QETRDVSRKNDP). Residues 415 to 426 (SSIERSPSESSH) are compositionally biased toward basic and acidic residues.

The chain is IQ domain-containing protein C (IQCC) from Bos taurus (Bovine).